We begin with the raw amino-acid sequence, 98 residues long: DNA-directed RNA polymerase subunit omega (98 aa).

Belongs to the RNA polymerase subunit omega family. The RNAP catalytic core consists of 2 alpha, 1 beta, 1 beta' and 1 omega subunit. When a sigma factor is associated with the core the holoenzyme is formed, which can initiate transcription.

It carries out the reaction RNA(n) + a ribonucleoside 5'-triphosphate = RNA(n+1) + diphosphate. Its function is as follows. Promotes RNA polymerase assembly. Latches the N- and C-terminal regions of the beta' subunit thereby facilitating its interaction with the beta and alpha subunits. The polypeptide is DNA-directed RNA polymerase subunit omega (Xylella fastidiosa (strain M12)).